The primary structure comprises 100 residues: Histone-like protein p6 (100 aa).

Residues 1-19 (MRKMMQREVTYTTAQLARM) mediate DNA binding.

It belongs to the phi29likevirus histone-like protein p6 family. As to quaternary structure, homodimer. Homomultimer. Binds to double-stranded DNA giving rise to multimeric nucleoprotein complexes. Binding specificity for the viral DNA is based on supercoiling, the viral genome having a negative superhelicity lower than that of plasmid DNA. Interacts with the DNA replication protein p17; this interaction optimizes the binding of protein p6 at the viral DNA ends, thus favoring the initiation of replication.

Histone-like nucleoprotein that binds to the viral dsDNA and responsible for wrapping and compacting the viral DNA about 4-fold. Forms a nucleoprotein complex in which the DNA adopts a right-handed toroidal conformation winding around a protein core. Binds ito most, if not all, the viral genome, although with different affinity, the highest one corresponding to the genome ends. The formation of the nucleoprotein complex at the genome ends, activates the initiation of viral DNA replication. The binding of p6 would recruit the complex formed by the TP and the DNA polymerase to the origin. Protein p6 also represses early transcription from promoter C2, and, together with protein p4, represses transcription from promoters A2b and A2c and activates late transcription from promoter A3. Protein p6 is therefore involved in the early to late transcription switch. The formation of the nucleoprotein complex at the right end of the phage genome where the early promoter C2 is located affects local topology, which may contribute to the promoter repression. This Bacillus phage B103 (Bacteriophage B103) protein is Histone-like protein p6 (6).